Here is an 857-residue protein sequence, read N- to C-terminus: Protein argonaute-1 (857 aa).

The PAZ domain maps to 227 to 346; it reads PVIEFMCEVL…LPLEVCNIVA (120 aa). 2 interaction with guide RNA regions span residues 309-314 and 522-564; these read YFKQKY and GKTP…LCLK. One can recognise a Piwi domain in the interval 515-816; sequence LIIVILPGKT…VAFRARYHLV (302 aa). The interval 670–675 is impairs access of bound RNA to the active site; it reads PEGQLP. Interaction with guide RNA stretches follow at residues 708 to 712, 751 to 759, and 788 to 813; these read RHHTR, HAGIQGTSR, and YVRC…RARY.

The protein belongs to the argonaute family. Ago subfamily. Interacts with DDB1, DDX5, DDX6, DHX30, DHX36, DDX47, DICER1, AGO2, ELAVL1, HNRNPF, IGF2BP1, ILF3, IMP8, MATR3, MOV10, PABPC1, PRMT5, RBM4, SART3, TNRC6B, UPF1 and YBX1. Associates with polysomes and messenger ribonucleoproteins (mNRPs). Interacts with LIMD1, WTIP and AJUBA. Interacts with APOBEC3F, APOBEC3G and APOBEC3H. Post-translationally, ubiquitinated on surface-exposed lysines by a SCF-like E3 ubiquitin-protein ligase complex containing ZSWIM8 during target-directed microRNA degradation (TDMD), a process that mediates degradation of microRNAs (miRNAs). Ubiquitination by the SCF-like E3 ubiquitin-protein ligase complex containing ZSWIM8 leads to its subsequent degradation, thereby exposing miRNAs for degradation. ZSWIM8 recognizes and binds AGO1 when it is engaged with a TDMD target.

The protein resides in the cytoplasm. Its subcellular location is the P-body. Functionally, required for RNA-mediated gene silencing (RNAi). Binds to short RNAs such as microRNAs (miRNAs) or short interfering RNAs (siRNAs), and represses the translation of mRNAs which are complementary to them. Lacks endonuclease activity and does not appear to cleave target mRNAs. Also required for transcriptional gene silencing (TGS) of promoter regions which are complementary to bound short antigene RNAs (agRNAs). The sequence is that of Protein argonaute-1 (AGO1) from Homo sapiens (Human).